Consider the following 447-residue polypeptide: Membrane metalloprotease ARASP, chloroplastic (447 aa).

The N-terminal 73 residues, 1 to 73, are a transit peptide targeting the chloroplast; sequence MLLNISSSPI…YPDGERFDFR (73 aa). His-102 contacts Zn(2+). Glu-103 is a catalytic residue. A Zn(2+)-binding site is contributed by His-106. Residues 177–197 form a helical membrane-spanning segment; that stretch reads SIVVSAGIIANVIFAYAIIFV. A PDZ domain is found at 202-244; it reads VGLPVQEAFPGVLVPEVKTFSAASRDGLLSGDVILAVDGTELS. A run of 2 helical transmembrane segments spans residues 379–399 and 413–433; these read LAVINLLPLPALDGGTLALIL and VEQGIMSSGIMLVIFLGLFLI.

This sequence belongs to the peptidase M50A family. It depends on Zn(2+) as a cofactor. As to expression, expressed in green seedlings and cotyledons. Low levels of expression in roots, siliques and seeds.

It is found in the plastid. The protein resides in the chloroplast inner membrane. In terms of biological role, metalloprotease essential for chloroplast and plant development. May be involved in regulated intramembrane proteolysis (RIP). In Arabidopsis thaliana (Mouse-ear cress), this protein is Membrane metalloprotease ARASP, chloroplastic.